Reading from the N-terminus, the 294-residue chain is StAR-related lipid transfer protein 3 (294 aa).

The MENTAL domain maps to 1-66 (DGYICNNGMD…YSPPESLAGS (66 aa)). An FFAT motif is present at residues 55 to 61 (QFYSPPE). Residues 58-77 (SPPESLAGSEEDLDEEGLGR) form a disordered region. The START domain maps to 79–292 (AVSPQEKALV…LRQRIRDLRS (214 aa)).

The protein belongs to the STARD3 family. As to quaternary structure, homodimer. Phosphorylated. Phosphorylation allows the tethering of two membranes that participates in the formation of ER-endosome contacts. Phosphorylation of FFAT motif drives membrane tethering between the endoplasmic reticulum and late endosomes that in turn allows the efficient transport of sterol mediated by the START domain.

It localises to the late endosome membrane. It catalyses the reaction cholesterol(in) = cholesterol(out). Functionally, sterol-binding protein that mediates cholesterol transport from the endoplasmic reticulum to endosomes. The sterol transport mechanism is triggered by phosphorylation of FFAT motif that leads to membrane tethering between the endoplasmic reticulum and late endosomes. Acts as a lipid transfer protein that redirects sterol to the endosome at the expense of the cell membrane and favors membrane formation inside endosomes. The chain is StAR-related lipid transfer protein 3 from Salvelinus fontinalis (Brook trout).